A 901-amino-acid polypeptide reads, in one-letter code: HTH-type transcriptional regulator MalT (901 aa).

39 to 46 contributes to the ATP binding site; that stretch reads SPAGYGKT. The HTH luxR-type domain maps to 829-894; it reads ELIRTSPLTQ…DAVQHAQQLL (66 aa). A DNA-binding region (H-T-H motif) is located at residues 853–872; the sequence is NEQIAGELAVAATTIKTHIR.

It belongs to the MalT family. Monomer in solution. Oligomerizes to an active state in the presence of the positive effectors ATP and maltotriose.

Its activity is regulated as follows. Activated by ATP and maltotriose, which are both required for DNA binding. Functionally, positively regulates the transcription of the maltose regulon whose gene products are responsible for uptake and catabolism of malto-oligosaccharides. Specifically binds to the promoter region of its target genes, recognizing a short DNA motif called the MalT box. This chain is HTH-type transcriptional regulator MalT, found in Salmonella gallinarum (strain 287/91 / NCTC 13346).